We begin with the raw amino-acid sequence, 322 residues long: Solute carrier family 25 member 16 (322 aa).

Solcar repeat units lie at residues 34 to 120 (FYWL…YKTF), 128 to 219 (SGHV…LKSV), and 241 to 322 (LKTH…AVAF).

Belongs to the mitochondrial carrier (TC 2.A.29) family.

Its subcellular location is the mitochondrion inner membrane. In terms of biological role, may be involved in the transport of coenzyme A in the mitochondrial matrix. Very little is known about the physiological function of this carrier. The protein is Solute carrier family 25 member 16 of Rattus norvegicus (Rat).